A 337-amino-acid chain; its full sequence is Trace amine-associated receptor 5 (337 aa).

Topologically, residues 1–34 (MRAVFIQGAEEHPAAFCYQVNGSCPRTVHTLGIQ) are extracellular. N-linked (GlcNAc...) asparagine glycosylation occurs at N21. Intrachain disulfides connect C24–C188 and C99–C192. A helical membrane pass occupies residues 35 to 55 (LVIYLACAAGMLIIVLGNVFV). Over 56 to 70 (AFAVSYFKALHTPTN) the chain is Cytoplasmic. The chain crosses the membrane as a helical span at residues 71 to 91 (FLLLSLALADMFLGLLVLPLS). Residues 92–109 (TIRSVESCWFFGDFLCRL) are Extracellular-facing. Residues 110-130 (HTYLDTLFCLTSIFHLCFISI) traverse the membrane as a helical segment. At 131 to 154 (DRHCAICDPLLYPSKFTVRVALRY) the chain is on the cytoplasmic side. Residues 155 to 175 (ILAGWGVPAAYTSLFLYTDVV) form a helical membrane-spanning segment. The extracellular Loop 2 (ECL2) stretch occupies residues 176-189 (ETRLSQWLEEMPCV). At 176 to 204 (ETRLSQWLEEMPCVGSCQLLLNKFWGWLN) the chain is on the extracellular side. A helical membrane pass occupies residues 205–225 (FPLFFVPCLIMISLYVKIFVV). The Cytoplasmic portion of the chain corresponds to 226-253 (ATRQAQQITTLSKSLAGAAKHERKAAKT). The helical transmembrane segment at 254-274 (LGIAVGIYLLCWLPFTIDTMV) threads the bilayer. Topologically, residues 275 to 284 (DSLLHFITPP) are extracellular. The chain crosses the membrane as a helical span at residues 285-307 (LVFDIFIWFAYFNSACNPIIYVF). The Cytoplasmic portion of the chain corresponds to 308–337 (SYQWFRKALKLTLSQKVFSPQTRTVDLYQE).

Belongs to the G-protein coupled receptor 1 family. In terms of tissue distribution, expressed almost exclusively in skeletal muscle and selected areas of the brain, such amygdala, hippocampus, caudate nucleus, thalamus and hypothalamus. Weak expression is also find in substantia nigra.

It is found in the cell membrane. In terms of biological role, olfactory receptor specific for trimethylamine, a trace amine. Also activated at lower level by dimethylethylamine. Trimethylamine is a bacterial metabolite found in some animal odors, and to humans it is a repulsive odor associated with bad breath and spoiled food. Trimethylamine-binding causes a conformation change that triggers signaling via G(s)-class of G alpha proteins (GNAL or GNAS). The protein is Trace amine-associated receptor 5 of Homo sapiens (Human).